Here is a 231-residue protein sequence, read N- to C-terminus: Putative N-acetylmannosamine-6-phosphate 2-epimerase (231 aa).

Belongs to the NanE family.

The enzyme catalyses an N-acyl-D-glucosamine 6-phosphate = an N-acyl-D-mannosamine 6-phosphate. Its pathway is amino-sugar metabolism; N-acetylneuraminate degradation; D-fructose 6-phosphate from N-acetylneuraminate: step 3/5. Functionally, converts N-acetylmannosamine-6-phosphate (ManNAc-6-P) to N-acetylglucosamine-6-phosphate (GlcNAc-6-P). The protein is Putative N-acetylmannosamine-6-phosphate 2-epimerase of Listeria monocytogenes serotype 4b (strain CLIP80459).